Consider the following 510-residue polypeptide: Proline--tRNA ligase (510 aa).

It belongs to the class-II aminoacyl-tRNA synthetase family. ProS type 3 subfamily. As to quaternary structure, homodimer.

The protein resides in the cytoplasm. The catalysed reaction is tRNA(Pro) + L-proline + ATP = L-prolyl-tRNA(Pro) + AMP + diphosphate. Functionally, catalyzes the attachment of proline to tRNA(Pro) in a two-step reaction: proline is first activated by ATP to form Pro-AMP and then transferred to the acceptor end of tRNA(Pro). This is Proline--tRNA ligase from Sphingomonas elodea.